The following is a 63-amino-acid chain: Large ribosomal subunit protein bL35 (63 aa).

This sequence belongs to the bacterial ribosomal protein bL35 family.

The chain is Large ribosomal subunit protein bL35 from Campylobacter fetus subsp. fetus (strain 82-40).